The sequence spans 218 residues: Thiopurine S-methyltransferase (218 aa).

Trp10, Leu45, Glu66, and Arg123 together coordinate S-adenosyl-L-methionine.

It belongs to the class I-like SAM-binding methyltransferase superfamily. TPMT family.

The protein resides in the cytoplasm. It catalyses the reaction S-adenosyl-L-methionine + a thiopurine = S-adenosyl-L-homocysteine + a thiopurine S-methylether.. The polypeptide is Thiopurine S-methyltransferase (Shewanella putrefaciens (strain CN-32 / ATCC BAA-453)).